A 146-amino-acid chain; its full sequence is Hemoglobin subunit beta (146 aa).

The residue at position 1 (valine 1) is an N-acetylvaline. Positions 2–146 (HLTADEKAAV…VATALAHKYH (145 aa)) constitute a Globin domain. At threonine 12 the chain carries Phosphothreonine. Serine 44 carries the post-translational modification Phosphoserine. At lysine 59 the chain carries N6-acetyllysine. Histidine 63 contacts heme b. Residue lysine 82 is modified to N6-acetyllysine. Histidine 92 lines the heme b pocket. Cysteine 93 carries the S-nitrosocysteine modification. Residue lysine 144 is modified to N6-acetyllysine.

It belongs to the globin family. As to quaternary structure, heterotetramer of two alpha chains and two beta chains. In terms of tissue distribution, red blood cells.

In terms of biological role, involved in oxygen transport from the lung to the various peripheral tissues. The protein is Hemoglobin subunit beta (HBB) of Taphozous georgianus (Sharp-nosed tomb bat).